Consider the following 149-residue polypeptide: Urease accessory protein UreE (149 aa).

The protein belongs to the UreE family.

The protein localises to the cytoplasm. Functionally, involved in urease metallocenter assembly. Binds nickel. Probably functions as a nickel donor during metallocenter assembly. The chain is Urease accessory protein UreE from Corynebacterium efficiens (strain DSM 44549 / YS-314 / AJ 12310 / JCM 11189 / NBRC 100395).